The primary structure comprises 319 residues: MEADNTTETDWLNITYITMEAAIGLCAVVGNMLVIWVVKLNPTLRTTTVYFIVSLALADIAVGVLVIPLAIAVSLQVKMHFYACLFMSCVLLIFTHASIMSLLAIAVHRYLRVKLTVRYRTVTTQRRIWLFLGLCWLVSFLVGLTPMFGWNRKATLASSQNSSTLLCHFRSVVSLDYMVFFSFITWILVPLVVMCIIYLDIFYIIRNKLSQNLTGFRETRAFYGREFKTAKSLFLVLFLFALCWLPLSIINFVSYFDVKIPDVAMCLGILLSHANSMMNPIVYACKIKKFKETYFLILRAVRLCQTSDSLDSNMEQTTE.

Residues 1-15 (MEADNTTETDWLNIT) are Extracellular-facing. 2 N-linked (GlcNAc...) asparagine glycosylation sites follow: asparagine 5 and asparagine 13. The chain crosses the membrane as a helical span at residues 16–38 (YITMEAAIGLCAVVGNMLVIWVV). At 39-49 (KLNPTLRTTTV) the chain is on the cytoplasmic side. Residues 50–73 (YFIVSLALADIAVGVLVIPLAIAV) form a helical membrane-spanning segment. The Extracellular segment spans residues 74–85 (SLQVKMHFYACL). Cysteine 84 and cysteine 167 are disulfide-bonded. The helical transmembrane segment at 86–107 (FMSCVLLIFTHASIMSLLAIAV) threads the bilayer. Over 108 to 127 (HRYLRVKLTVRYRTVTTQRR) the chain is Cytoplasmic. Residues 128–149 (IWLFLGLCWLVSFLVGLTPMFG) form a helical membrane-spanning segment. The Extracellular portion of the chain corresponds to 150–178 (WNRKATLASSQNSSTLLCHFRSVVSLDYM). A glycan (N-linked (GlcNAc...) asparagine) is linked at asparagine 161. The chain crosses the membrane as a helical span at residues 179–199 (VFFSFITWILVPLVVMCIIYL). Over 200 to 232 (DIFYIIRNKLSQNLTGFRETRAFYGREFKTAKS) the chain is Cytoplasmic. A helical membrane pass occupies residues 233-256 (LFLVLFLFALCWLPLSIINFVSYF). At 257–262 (DVKIPD) the chain is on the extracellular side. Residues 263 to 285 (VAMCLGILLSHANSMMNPIVYAC) traverse the membrane as a helical segment. The Cytoplasmic portion of the chain corresponds to 286 to 319 (KIKKFKETYFLILRAVRLCQTSDSLDSNMEQTTE). Cysteine 304 carries S-palmitoyl cysteine lipidation.

Belongs to the G-protein coupled receptor 1 family. In terms of processing, phosphorylation on Thr-317 and Thr-318 may be crucial for rapid desensitization. Phosphorylation on Thr-317 may be necessary for phosphorylation on Thr-318 to occur.

The protein localises to the cell membrane. Receptor for adenosine. The activity of this receptor is mediated by G proteins which inhibits adenylyl cyclase. The polypeptide is Adenosine receptor A3 (Adora3) (Mus musculus (Mouse)).